Reading from the N-terminus, the 167-residue chain is MAKFIDPDKLELEDNVVAINRITKVVKGGRRLRFAALVIVGDKNGHVGFGTGKAQEVPEAIRKAVEAARKNLIEVPIVGTTIPHEVLGTFGGGKIMLKPAAEGSGVTAGGAVRSVMELAGVADVTSKRLGSNTPVNAVRATFDGLTQLKRAEEVAALRGVSLQHLAE.

Residues 12-75 form the S5 DRBM domain; it reads LEDNVVAINR…EAARKNLIEV (64 aa).

This sequence belongs to the universal ribosomal protein uS5 family. Part of the 30S ribosomal subunit. Contacts proteins S4 and S8.

Functionally, with S4 and S12 plays an important role in translational accuracy. Its function is as follows. Located at the back of the 30S subunit body where it stabilizes the conformation of the head with respect to the body. The sequence is that of Small ribosomal subunit protein uS5 from Levilactobacillus brevis (strain ATCC 367 / BCRC 12310 / CIP 105137 / JCM 1170 / LMG 11437 / NCIMB 947 / NCTC 947) (Lactobacillus brevis).